A 395-amino-acid chain; its full sequence is Tryptophan--tRNA ligase, cytoplasmic (395 aa).

The 'HIGH' region signature appears at 91 to 100 (PSSDSMHLGH). Residues 275-279 (KMSAS) carry the 'KMSKS' region motif. Phosphothreonine is present on residues Thr-288 and Thr-290.

Belongs to the class-I aminoacyl-tRNA synthetase family.

The protein localises to the cytoplasm. The catalysed reaction is tRNA(Trp) + L-tryptophan + ATP = L-tryptophyl-tRNA(Trp) + AMP + diphosphate + H(+). In Schizosaccharomyces pombe (strain 972 / ATCC 24843) (Fission yeast), this protein is Tryptophan--tRNA ligase, cytoplasmic (wrs1).